Reading from the N-terminus, the 61-residue chain is Large ribosomal subunit protein bL32 (61 aa).

Over residues 1 to 16 the composition is skewed to basic residues; sequence MAVPRRKTSPSRRGMR. Residues 1 to 61 are disordered; that stretch reads MAVPRRKTSP…RQVLKAKSDS (61 aa). The segment covering 27 to 44 has biased composition (basic and acidic residues); that stretch reads YAEDKDSGELRRPHHLDL.

The protein belongs to the bacterial ribosomal protein bL32 family.

The polypeptide is Large ribosomal subunit protein bL32 (Nitrobacter winogradskyi (strain ATCC 25391 / DSM 10237 / CIP 104748 / NCIMB 11846 / Nb-255)).